The following is a 574-amino-acid chain: Acetolactate synthase isozyme 3 large subunit (574 aa).

Glu51 provides a ligand contact to thiamine diphosphate. FAD contacts are provided by residues Arg153, 261–282 (HGTY…VGVR), and 304–323 (DIDP…IVGD). The tract at residues 397–477 (QHQMFAALYY…VLVVNLNNRY (81 aa)) is thiamine pyrophosphate binding. Residues Asp448 and Asn475 each contribute to the Mg(2+) site.

This sequence belongs to the TPP enzyme family. In terms of assembly, dimer of large and small chains. Mg(2+) is required as a cofactor. Requires thiamine diphosphate as cofactor.

The catalysed reaction is 2 pyruvate + H(+) = (2S)-2-acetolactate + CO2. The protein operates within amino-acid biosynthesis; L-isoleucine biosynthesis; L-isoleucine from 2-oxobutanoate: step 1/4. It participates in amino-acid biosynthesis; L-valine biosynthesis; L-valine from pyruvate: step 1/4. Its activity is regulated as follows. Sensitive to valine inhibition. The sequence is that of Acetolactate synthase isozyme 3 large subunit (ilvI) from Escherichia coli (strain K12).